We begin with the raw amino-acid sequence, 541 residues long: Arginine--tRNA ligase (541 aa).

A 'HIGH' region motif is present at residues 119–129 (ANPTGPLHIGH).

Belongs to the class-I aminoacyl-tRNA synthetase family. As to quaternary structure, monomer.

Its subcellular location is the cytoplasm. The catalysed reaction is tRNA(Arg) + L-arginine + ATP = L-arginyl-tRNA(Arg) + AMP + diphosphate. The polypeptide is Arginine--tRNA ligase (Helicobacter pylori (strain G27)).